The primary structure comprises 254 residues: Proteasome subunit alpha (254 aa).

Positions 232–254 (PEVDSSESSNEAEAGAEKGSGES) are disordered.

The protein belongs to the peptidase T1A family. In terms of assembly, the 20S proteasome core is composed of 14 alpha and 14 beta subunits that assemble into four stacked heptameric rings, resulting in a barrel-shaped structure. The two inner rings, each composed of seven catalytic beta subunits, are sandwiched by two outer rings, each composed of seven alpha subunits. The catalytic chamber with the active sites is on the inside of the barrel. Has a gated structure, the ends of the cylinder being occluded by the N-termini of the alpha-subunits. Is capped by the proteasome-associated ATPase, ARC.

The protein resides in the cytoplasm. Its pathway is protein degradation; proteasomal Pup-dependent pathway. Its activity is regulated as follows. The formation of the proteasomal ATPase ARC-20S proteasome complex, likely via the docking of the C-termini of ARC into the intersubunit pockets in the alpha-rings, may trigger opening of the gate for substrate entry. Interconversion between the open-gate and close-gate conformations leads to a dynamic regulation of the 20S proteasome proteolysis activity. Functionally, component of the proteasome core, a large protease complex with broad specificity involved in protein degradation. The chain is Proteasome subunit alpha from Mycolicibacterium vanbaalenii (strain DSM 7251 / JCM 13017 / BCRC 16820 / KCTC 9966 / NRRL B-24157 / PYR-1) (Mycobacterium vanbaalenii).